The primary structure comprises 76 residues: Small ribosomal subunit protein bS18 (76 aa).

It belongs to the bacterial ribosomal protein bS18 family. In terms of assembly, part of the 30S ribosomal subunit. Forms a tight heterodimer with protein bS6.

Binds as a heterodimer with protein bS6 to the central domain of the 16S rRNA, where it helps stabilize the platform of the 30S subunit. This Methylococcus capsulatus (strain ATCC 33009 / NCIMB 11132 / Bath) protein is Small ribosomal subunit protein bS18.